A 452-amino-acid chain; its full sequence is Pup--protein ligase (452 aa).

Position 9 (glutamate 9) interacts with Mg(2+). ATP is bound at residue arginine 53. Residue tyrosine 55 participates in Mg(2+) binding. Aspartate 57 acts as the Proton acceptor in catalysis. Glutamate 63 is a binding site for Mg(2+). The ATP site is built by threonine 66 and tryptophan 419.

This sequence belongs to the Pup ligase/Pup deamidase family. Pup-conjugating enzyme subfamily.

It carries out the reaction ATP + [prokaryotic ubiquitin-like protein]-L-glutamate + [protein]-L-lysine = ADP + phosphate + N(6)-([prokaryotic ubiquitin-like protein]-gamma-L-glutamyl)-[protein]-L-lysine.. It participates in protein degradation; proteasomal Pup-dependent pathway. The protein operates within protein modification; protein pupylation. Its function is as follows. Catalyzes the covalent attachment of the prokaryotic ubiquitin-like protein modifier Pup to the proteasomal substrate proteins, thereby targeting them for proteasomal degradation. This tagging system is termed pupylation. The ligation reaction involves the side-chain carboxylate of the C-terminal glutamate of Pup and the side-chain amino group of a substrate lysine. In Thermobifida fusca (strain YX), this protein is Pup--protein ligase.